Here is a 325-residue protein sequence, read N- to C-terminus: Beta-ketoacyl-[acyl-carrier-protein] synthase III (325 aa).

Catalysis depends on residues cysteine 114 and histidine 252. The interval 253 to 257 (QANFR) is ACP-binding. Asparagine 282 is an active-site residue.

It belongs to the thiolase-like superfamily. FabH family. In terms of assembly, homodimer.

Its subcellular location is the cytoplasm. The enzyme catalyses malonyl-[ACP] + acetyl-CoA + H(+) = 3-oxobutanoyl-[ACP] + CO2 + CoA. The protein operates within lipid metabolism; fatty acid biosynthesis. Catalyzes the condensation reaction of fatty acid synthesis by the addition to an acyl acceptor of two carbons from malonyl-ACP. Catalyzes the first condensation reaction which initiates fatty acid synthesis and may therefore play a role in governing the total rate of fatty acid production. Possesses both acetoacetyl-ACP synthase and acetyl transacylase activities. Its substrate specificity determines the biosynthesis of branched-chain and/or straight-chain of fatty acids. The protein is Beta-ketoacyl-[acyl-carrier-protein] synthase III of Novosphingobium aromaticivorans (strain ATCC 700278 / DSM 12444 / CCUG 56034 / CIP 105152 / NBRC 16084 / F199).